Here is a 1126-residue protein sequence, read N- to C-terminus: Carbamoyl phosphate synthase large chain (1126 aa).

Residues 1–402 (MPKRTDIKSV…SLGKAMRSID (402 aa)) are carboxyphosphate synthetic domain. 12 residues coordinate ATP: R129, R169, G175, G176, E208, I210, E215, G241, V242, H243, Q285, and E299. Residues 133 to 328 (KKVVEEAGAE…IAKIATKLAL (196 aa)) form the ATP-grasp 1 domain. The Mg(2+) site is built by Q285, E299, and N301. Mn(2+) contacts are provided by Q285, E299, and N301. The oligomerization domain stretch occupies residues 403–551 (KRHMGFNWDG…YYYSCYADET (149 aa)). The carbamoyl phosphate synthetic domain stretch occupies residues 552-962 (ELRPRDREAV…AFAKSQLAAY (411 aa)). One can recognise an ATP-grasp 2 domain in the interval 681 to 881 (GEVLKKADMN…LAKAAARIMV (201 aa)). The ATP site is built by R717, K765, L767, E772, G797, V798, H799, S800, Q840, and E852. Residues Q840, E852, and N854 each coordinate Mg(2+). Positions 840, 852, and 854 each coordinate Mn(2+). The tract at residues 963 to 1126 (EGGLPTSGNV…TQLFELESRD (164 aa)) is allosteric domain. The region spanning 964–1126 (GGLPTSGNVF…TQLFELESRD (163 aa)) is the MGS-like domain.

It belongs to the CarB family. In terms of assembly, composed of two chains; the small (or glutamine) chain promotes the hydrolysis of glutamine to ammonia, which is used by the large (or ammonia) chain to synthesize carbamoyl phosphate. Tetramer of heterodimers (alpha,beta)4. It depends on Mg(2+) as a cofactor. Mn(2+) serves as cofactor.

It catalyses the reaction hydrogencarbonate + L-glutamine + 2 ATP + H2O = carbamoyl phosphate + L-glutamate + 2 ADP + phosphate + 2 H(+). It carries out the reaction hydrogencarbonate + NH4(+) + 2 ATP = carbamoyl phosphate + 2 ADP + phosphate + 2 H(+). It functions in the pathway amino-acid biosynthesis; L-arginine biosynthesis; carbamoyl phosphate from bicarbonate: step 1/1. It participates in pyrimidine metabolism; UMP biosynthesis via de novo pathway; (S)-dihydroorotate from bicarbonate: step 1/3. Large subunit of the glutamine-dependent carbamoyl phosphate synthetase (CPSase). CPSase catalyzes the formation of carbamoyl phosphate from the ammonia moiety of glutamine, carbonate, and phosphate donated by ATP, constituting the first step of 2 biosynthetic pathways, one leading to arginine and/or urea and the other to pyrimidine nucleotides. The large subunit (synthetase) binds the substrates ammonia (free or transferred from glutamine from the small subunit), hydrogencarbonate and ATP and carries out an ATP-coupled ligase reaction, activating hydrogencarbonate by forming carboxy phosphate which reacts with ammonia to form carbamoyl phosphate. This Bifidobacterium adolescentis (strain ATCC 15703 / DSM 20083 / NCTC 11814 / E194a) protein is Carbamoyl phosphate synthase large chain.